The sequence spans 77 residues: Acyl carrier protein (77 aa).

The Carrier domain occupies 2-77; that stretch reads SDIAARVKKI…DATKFISEAQ (76 aa). Residue serine 37 is modified to O-(pantetheine 4'-phosphoryl)serine.

It belongs to the acyl carrier protein (ACP) family. In terms of processing, 4'-phosphopantetheine is transferred from CoA to a specific serine of apo-ACP by AcpS. This modification is essential for activity because fatty acids are bound in thioester linkage to the sulfhydryl of the prosthetic group.

It is found in the cytoplasm. Its pathway is lipid metabolism; fatty acid biosynthesis. Functionally, carrier of the growing fatty acid chain in fatty acid biosynthesis. The sequence is that of Acyl carrier protein from Jannaschia sp. (strain CCS1).